Consider the following 366-residue polypeptide: tRNA/tmRNA (uracil-C(5))-methyltransferase (366 aa).

Q190, Y218, N223, E239, and D299 together coordinate S-adenosyl-L-methionine. Residue C324 is the Nucleophile of the active site. E358 (proton acceptor) is an active-site residue.

The protein belongs to the class I-like SAM-binding methyltransferase superfamily. RNA M5U methyltransferase family. TrmA subfamily.

It carries out the reaction uridine(54) in tRNA + S-adenosyl-L-methionine = 5-methyluridine(54) in tRNA + S-adenosyl-L-homocysteine + H(+). The catalysed reaction is uridine(341) in tmRNA + S-adenosyl-L-methionine = 5-methyluridine(341) in tmRNA + S-adenosyl-L-homocysteine + H(+). Dual-specificity methyltransferase that catalyzes the formation of 5-methyluridine at position 54 (m5U54) in all tRNAs, and that of position 341 (m5U341) in tmRNA (transfer-mRNA). In Escherichia coli (strain ATCC 8739 / DSM 1576 / NBRC 3972 / NCIMB 8545 / WDCM 00012 / Crooks), this protein is tRNA/tmRNA (uracil-C(5))-methyltransferase.